A 100-amino-acid chain; its full sequence is Putative pterin-4-alpha-carbinolamine dehydratase (100 aa).

It belongs to the pterin-4-alpha-carbinolamine dehydratase family.

The catalysed reaction is (4aS,6R)-4a-hydroxy-L-erythro-5,6,7,8-tetrahydrobiopterin = (6R)-L-erythro-6,7-dihydrobiopterin + H2O. This is Putative pterin-4-alpha-carbinolamine dehydratase from Bradyrhizobium sp. (strain ORS 278).